Reading from the N-terminus, the 187-residue chain is Ion-translocating oxidoreductase complex subunit B (187 aa).

Positions 1–23 are hydrophobic; sequence MIAAAASMSALGLGLGYLLGAAA. The 4Fe-4S domain maps to 29 to 88; it reads ETPPIVEEIAKILPGTNCGACGFPGCNGLAEAMAEGNAPVTACTPGGRDVALALAEIVTV. 12 residues coordinate [4Fe-4S] cluster: Cys-46, Cys-49, Cys-54, Cys-71, Cys-112, Cys-115, Cys-118, Cys-122, Cys-142, Cys-145, Cys-148, and Cys-152. 2 consecutive 4Fe-4S ferredoxin-type domains span residues 103–132 and 133–162; these read MVAF…GGAK and QIHT…SRVK.

This sequence belongs to the 4Fe4S bacterial-type ferredoxin family. RnfB subfamily. The complex is composed of six subunits: RnfA, RnfB, RnfC, RnfD, RnfE and RnfG. The cofactor is [4Fe-4S] cluster.

The protein localises to the cellular chromatophore membrane. In terms of biological role, part of a membrane-bound complex that couples electron transfer with translocation of ions across the membrane. Required for nitrogen fixation. Involved in electron transfer to nitrogenase. The polypeptide is Ion-translocating oxidoreductase complex subunit B (Rhodobacter capsulatus (Rhodopseudomonas capsulata)).